A 1782-amino-acid polypeptide reads, in one-letter code: Atrochrysone carboxylic acid synthase (1782 aa).

Residues 41 to 270 (HTYTKDRRYP…ALPVYGGLCH (230 aa)) form an N-terminal acylcarrier protein transacylase domain (SAT) region. The 435-residue stretch at 407-841 (QSKIAIVGMS…GGNSTLAIEE (435 aa)) folds into the Ketosynthase family 3 (KS3) domain. Catalysis depends on for beta-ketoacyl synthase activity residues Cys580, His716, and His759. Residues 946–1266 (FAFTGQGSSY…LGILHCAGVP (321 aa)) form a malonyl-CoA:ACP transacylase (MAT) domain region. Positions 1331–1648 (TSTVQQIIHE…RILLNRFFSA (318 aa)) are product template (PT) domain. Residues 1335–1468 (QQIIHEQYDG…ATVYYEEASD (134 aa)) are N-terminal hotdog fold. The PKS/mFAS DH domain maps to 1335 to 1643 (QQIIHEQYDG…FRRYPRILLN (309 aa)). Catalysis depends on His1367, which acts as the Proton acceptor; for dehydratase activity. Positions 1495–1643 (VANRFTRRMA…FRRYPRILLN (149 aa)) are C-terminal hotdog fold. Asp1554 serves as the catalytic Proton donor; for dehydratase activity. The disordered stretch occupies residues 1653-1703 (ARKSTPATSAPAPAPPAGSEALQPKAAPASTPAAPASADAPTTNGVKAAAE). The span at 1678-1695 (AAPASTPAAPASADAPTT) shows a compositional bias: low complexity. The Carrier domain maps to 1704–1781 (PDANSTAAKA…DLKSWLLEYY (78 aa)). O-(pantetheine 4'-phosphoryl)serine is present on Ser1741.

As to expression, specifically expressed in conidia.

It carries out the reaction holo-[ACP] + 8 malonyl-CoA + 8 H(+) = atrochrysone carboxyl-[ACP] + 8 CO2 + 8 CoA + 2 H2O. Its pathway is secondary metabolite biosynthesis. Functionally, non-reducing polyketide synthase; part of the gene cluster that mediates the biosynthesis of trypacidin, a mycotoxin with antiprotozoal activity and that plays a role in the infection process. The pathway begins with the synthesis of atrochrysone thioester by the polyketide synthase (PKS) tpcC. The atrochrysone carboxyl ACP thioesterase tpcB then breaks the thioester bond and releases the atrochrysone carboxylic acid from tpcC. The decarboxylase tpcK converts atrochrysone carboxylic acid to atrochrysone which is further reduced into emodin anthrone. The next step is performed by the emodin anthrone oxygenase tpcL that catalyzes the oxidation of emodin anthrone to emodin. Emodin O-methyltransferase encoded by tpcA catalyzes methylation of the 8-hydroxy group of emodin to form questin. Ring cleavage of questin by questin oxidase tpcI leads to desmethylsulochrin via several intermediates including questin epoxide. Another methylation step catalyzed by tpcM leads to the formation of sulochrin which is further converted to monomethylsulfochrin by tpcH. Finally, the tpcJ catalyzes the conversion of monomethylsulfochrin to trypacidin. Trypacidin is toxic for human pulmonary and bronchial epithelial cells by initiating the intracellular formation of nitric oxide (NO) and hydrogen peroxide (H(2)O(2)), thus triggering host necrotic cell death. The trypacidin pathway is also able to produce endocrocin via a distinct route from the endocrocin Enc pathway. This Aspergillus fumigatus (strain ATCC MYA-4609 / CBS 101355 / FGSC A1100 / Af293) (Neosartorya fumigata) protein is Atrochrysone carboxylic acid synthase.